A 121-amino-acid chain; its full sequence is Large ribosomal subunit protein bL12 (121 aa).

The protein belongs to the bacterial ribosomal protein bL12 family. As to quaternary structure, homodimer. Part of the ribosomal stalk of the 50S ribosomal subunit. Forms a multimeric L10(L12)X complex, where L10 forms an elongated spine to which 2 to 4 L12 dimers bind in a sequential fashion. Binds GTP-bound translation factors.

Functionally, forms part of the ribosomal stalk which helps the ribosome interact with GTP-bound translation factors. Is thus essential for accurate translation. This chain is Large ribosomal subunit protein bL12, found in Erwinia tasmaniensis (strain DSM 17950 / CFBP 7177 / CIP 109463 / NCPPB 4357 / Et1/99).